The chain runs to 693 residues: UvrABC system protein B (693 aa).

In terms of domain architecture, Helicase ATP-binding spans 35–188; that stretch reads ERINNGEKDV…DQLLRQFVGI (154 aa). An ATP-binding site is contributed by 48–55; sequence GATGTGKS. The Beta-hairpin signature appears at 101 to 124; the sequence is YYDYYQPEAYVPQTDTFIEKDSSV. The Helicase C-terminal domain occupies 438–600; sequence QIDDLLGEIR…VDPTPLRKRI (163 aa). Residues 612-634 form a disordered region; it reads ADTKSLLESAGKGRSRGKAPVPV. The UVR domain maps to 648–683; sequence VDLIEQLTAQMHSAAGELQFELAARLRDEVGDLKKE.

This sequence belongs to the UvrB family. In terms of assembly, forms a heterotetramer with UvrA during the search for lesions. Interacts with UvrC in an incision complex.

The protein resides in the cytoplasm. Its function is as follows. The UvrABC repair system catalyzes the recognition and processing of DNA lesions. A damage recognition complex composed of 2 UvrA and 2 UvrB subunits scans DNA for abnormalities. Upon binding of the UvrA(2)B(2) complex to a putative damaged site, the DNA wraps around one UvrB monomer. DNA wrap is dependent on ATP binding by UvrB and probably causes local melting of the DNA helix, facilitating insertion of UvrB beta-hairpin between the DNA strands. Then UvrB probes one DNA strand for the presence of a lesion. If a lesion is found the UvrA subunits dissociate and the UvrB-DNA preincision complex is formed. This complex is subsequently bound by UvrC and the second UvrB is released. If no lesion is found, the DNA wraps around the other UvrB subunit that will check the other stand for damage. This chain is UvrABC system protein B, found in Renibacterium salmoninarum (strain ATCC 33209 / DSM 20767 / JCM 11484 / NBRC 15589 / NCIMB 2235).